Here is a 416-residue protein sequence, read N- to C-terminus: Phosphatidylinositol 5-phosphate 4-kinase type-2 beta (416 aa).

S2 is modified (N-acetylserine). T8 carries the phosphothreonine modification. S19 is modified (phosphoserine). Positions 38-415 constitute a PIPK domain; the sequence is ASEPILSVLM…RFNEFMSNIL (378 aa). Residues 64–70 form a required for interaction with PIP5K1A region; that stretch reads VMLMPDD. An N6-acetyllysine mark is found at K94 and K150. ATP is bound by residues 202–204 and K214; that span reads RNV. GTP contacts are provided by residues 203–204 and K214; that span reads NV. Phosphothreonine is present on T322. The residue at position 326 (S326) is a Phosphoserine. GTP is bound at residue D369.

Homodimer. Binds TNFRSF1A. Interacts with PIP4K2A; the interaction suppresses ubiquitination by the SPOP/CUL3 complex. Probably interacts with PIP5K1A; the interaction inhibits PIP5K1A kinase activity. In terms of processing, ubiquitinated by the SPOP/CUL3 complex. Ubiquitination is stimulated by PtdIns5P levels. Post-translationally, phosphorylated on serine residues.

The protein resides in the endoplasmic reticulum membrane. It localises to the cell membrane. Its subcellular location is the nucleus. It is found in the cytoplasm. The catalysed reaction is a 1,2-diacyl-sn-glycero-3-phospho-(1D-myo-inositol-5-phosphate) + ATP = a 1,2-diacyl-sn-glycero-3-phospho-(1D-myo-inositol-4,5-bisphosphate) + ADP + H(+). It carries out the reaction 1,2-dihexadecanoyl-sn-glycero-3-phospho-(1D-myo-inositol-5-phosphate) + ATP = 1,2-dihexadecanoyl-sn-glycero-3-phospho-(1D-myo-inositol-4,5-bisphosphate) + ADP + H(+). It catalyses the reaction 1,2-dihexadecanoyl-sn-glycero-3-phospho-(1D-myo-inositol-5-phosphate) + GTP = 1,2-dihexadecanoyl-sn-glycero-3-phospho-(1D-myo-inositol-4,5-bisphosphate) + GDP + H(+). Functionally, participates in the biosynthesis of phosphatidylinositol 4,5-bisphosphate. Preferentially utilizes GTP, rather than ATP, for PI(5)P phosphorylation and its activity reflects changes in direct proportion to the physiological GTP concentration. Its GTP-sensing activity is critical for metabolic adaptation. PIP4Ks negatively regulate insulin signaling through a catalytic-independent mechanism. They interact with PIP5Ks and suppress PIP5K-mediated PtdIns(4,5)P2 synthesis and insulin-dependent conversion to PtdIns(3,4,5)P3. The chain is Phosphatidylinositol 5-phosphate 4-kinase type-2 beta from Rattus norvegicus (Rat).